Reading from the N-terminus, the 587-residue chain is Glutamine--tRNA ligase (587 aa).

Positions 58 to 68 match the 'HIGH' region motif; that stretch reads PEPNGYLHIGH. Residues 59–61 and 65–71 each bind ATP; these read EPN and HIGHAKS. The L-glutamine site is built by Asp-91 and Tyr-240. ATP-binding positions include Thr-259 and 294–295; that span reads RL. The 'KMSKS' region signature appears at 301–305; sequence VTSKR.

This sequence belongs to the class-I aminoacyl-tRNA synthetase family. In terms of assembly, monomer.

It localises to the cytoplasm. The catalysed reaction is tRNA(Gln) + L-glutamine + ATP = L-glutaminyl-tRNA(Gln) + AMP + diphosphate. This Bordetella bronchiseptica (strain ATCC BAA-588 / NCTC 13252 / RB50) (Alcaligenes bronchisepticus) protein is Glutamine--tRNA ligase.